The sequence spans 160 residues: Ribosomal RNA large subunit methyltransferase H (160 aa).

S-adenosyl-L-methionine-binding positions include Leu76, Gly108, and 127-132 (LGKMTW).

This sequence belongs to the RNA methyltransferase RlmH family. As to quaternary structure, homodimer.

Its subcellular location is the cytoplasm. It carries out the reaction pseudouridine(1915) in 23S rRNA + S-adenosyl-L-methionine = N(3)-methylpseudouridine(1915) in 23S rRNA + S-adenosyl-L-homocysteine + H(+). Specifically methylates the pseudouridine at position 1915 (m3Psi1915) in 23S rRNA. This chain is Ribosomal RNA large subunit methyltransferase H, found in Rhizobium leguminosarum bv. trifolii (strain WSM2304).